Here is a 104-residue protein sequence, read N- to C-terminus: Small ribosomal subunit protein uS10 (104 aa).

The protein belongs to the universal ribosomal protein uS10 family. In terms of assembly, part of the 30S ribosomal subunit.

Functionally, involved in the binding of tRNA to the ribosomes. The protein is Small ribosomal subunit protein uS10 of Thermoplasma acidophilum (strain ATCC 25905 / DSM 1728 / JCM 9062 / NBRC 15155 / AMRC-C165).